A 107-amino-acid chain; its full sequence is Putative antitoxin VapB5 (107 aa).

A run of 2 helical transmembrane segments spans residues 3–23 (GPVI…ILLA) and 65–85 (LIIL…AYLY).

It localises to the cell membrane. Possibly the antitoxin component of a type II toxin-antitoxin (TA) system. Its cognate toxin is VapC5 (Potential). The protein is Putative antitoxin VapB5 (vapB5) of Methanocaldococcus jannaschii (strain ATCC 43067 / DSM 2661 / JAL-1 / JCM 10045 / NBRC 100440) (Methanococcus jannaschii).